Here is a 322-residue protein sequence, read N- to C-terminus: Adenine deaminase (322 aa).

Positions 11, 13, and 189 each coordinate Zn(2+). Residue Glu-192 is the Proton donor of the active site. Asp-270 serves as a coordination point for Zn(2+). Residue Asp-271 participates in substrate binding.

Belongs to the metallo-dependent hydrolases superfamily. Adenosine and AMP deaminases family. Adenine deaminase type 2 subfamily. The cofactor is Zn(2+).

The catalysed reaction is adenine + H2O + H(+) = hypoxanthine + NH4(+). Its function is as follows. Catalyzes the hydrolytic deamination of adenine to hypoxanthine. Plays an important role in the purine salvage pathway and in nitrogen catabolism. This is Adenine deaminase from Rhizobium rhizogenes (strain K84 / ATCC BAA-868) (Agrobacterium radiobacter).